Consider the following 142-residue polypeptide: NADH-quinone oxidoreductase subunit A 2 (142 aa).

The next 3 membrane-spanning stretches (helical) occupy residues 18-38, 73-93, and 104-124; these read FLPLALYTLAASILIGVLLLA, FYLIAIFFIVFDVEAAFIFAW, and GLVHITFFIVILLLGLVWLWL.

Belongs to the complex I subunit 3 family. In terms of assembly, NDH-1 is composed of 14 different subunits. Subunits NuoA, H, J, K, L, M, N constitute the membrane sector of the complex.

The protein localises to the cell inner membrane. It carries out the reaction a quinone + NADH + 5 H(+)(in) = a quinol + NAD(+) + 4 H(+)(out). Its function is as follows. NDH-1 shuttles electrons from NADH, via FMN and iron-sulfur (Fe-S) centers, to quinones in the respiratory chain. The immediate electron acceptor for the enzyme in this species is believed to be ubiquinone. Couples the redox reaction to proton translocation (for every two electrons transferred, four hydrogen ions are translocated across the cytoplasmic membrane), and thus conserves the redox energy in a proton gradient. The chain is NADH-quinone oxidoreductase subunit A 2 from Geobacter sulfurreducens (strain ATCC 51573 / DSM 12127 / PCA).